Reading from the N-terminus, the 289-residue chain is Phosphatidylserine decarboxylase proenzyme (289 aa).

Catalysis depends on charge relay system; for autoendoproteolytic cleavage activity residues Asp89, His146, and Ser252. Ser252 (schiff-base intermediate with substrate; via pyruvic acid; for decarboxylase activity) is an active-site residue. Ser252 carries the post-translational modification Pyruvic acid (Ser); by autocatalysis.

This sequence belongs to the phosphatidylserine decarboxylase family. PSD-B subfamily. Prokaryotic type I sub-subfamily. In terms of assembly, heterodimer of a large membrane-associated beta subunit and a small pyruvoyl-containing alpha subunit. Pyruvate serves as cofactor. Is synthesized initially as an inactive proenzyme. Formation of the active enzyme involves a self-maturation process in which the active site pyruvoyl group is generated from an internal serine residue via an autocatalytic post-translational modification. Two non-identical subunits are generated from the proenzyme in this reaction, and the pyruvate is formed at the N-terminus of the alpha chain, which is derived from the carboxyl end of the proenzyme. The autoendoproteolytic cleavage occurs by a canonical serine protease mechanism, in which the side chain hydroxyl group of the serine supplies its oxygen atom to form the C-terminus of the beta chain, while the remainder of the serine residue undergoes an oxidative deamination to produce ammonia and the pyruvoyl prosthetic group on the alpha chain. During this reaction, the Ser that is part of the protease active site of the proenzyme becomes the pyruvoyl prosthetic group, which constitutes an essential element of the active site of the mature decarboxylase.

It is found in the cell membrane. It catalyses the reaction a 1,2-diacyl-sn-glycero-3-phospho-L-serine + H(+) = a 1,2-diacyl-sn-glycero-3-phosphoethanolamine + CO2. The protein operates within phospholipid metabolism; phosphatidylethanolamine biosynthesis; phosphatidylethanolamine from CDP-diacylglycerol: step 2/2. Its function is as follows. Catalyzes the formation of phosphatidylethanolamine (PtdEtn) from phosphatidylserine (PtdSer). The polypeptide is Phosphatidylserine decarboxylase proenzyme (Shewanella sp. (strain W3-18-1)).